The primary structure comprises 398 residues: tRNA-specific 2-thiouridylase MnmA (398 aa).

ATP contacts are provided by residues 19-26 (AMSGGVDS) and Leu-45. Residue Cys-113 is the Nucleophile of the active site. A disulfide bridge links Cys-113 with Cys-210. Residue Gly-137 participates in ATP binding. Residues 160–162 (RDQ) are interaction with tRNA. Cys-210 serves as the catalytic Cysteine persulfide intermediate.

It belongs to the MnmA/TRMU family.

It localises to the cytoplasm. The enzyme catalyses S-sulfanyl-L-cysteinyl-[protein] + uridine(34) in tRNA + AH2 + ATP = 2-thiouridine(34) in tRNA + L-cysteinyl-[protein] + A + AMP + diphosphate + H(+). Functionally, catalyzes the 2-thiolation of uridine at the wobble position (U34) of tRNA, leading to the formation of s(2)U34. The sequence is that of tRNA-specific 2-thiouridylase MnmA from Rhodopseudomonas palustris (strain BisB5).